The chain runs to 493 residues: Glutamate--tRNA ligase (493 aa).

A 'HIGH' region motif is present at residues 10 to 20; it reads PSPTGTPHVGL. Residues 254-258 carry the 'KMSKS' region motif; that stretch reads KLSKR. Lysine 257 is a binding site for ATP.

It belongs to the class-I aminoacyl-tRNA synthetase family. Glutamate--tRNA ligase type 1 subfamily. In terms of assembly, monomer.

The protein localises to the cytoplasm. It carries out the reaction tRNA(Glu) + L-glutamate + ATP = L-glutamyl-tRNA(Glu) + AMP + diphosphate. Functionally, catalyzes the attachment of glutamate to tRNA(Glu) in a two-step reaction: glutamate is first activated by ATP to form Glu-AMP and then transferred to the acceptor end of tRNA(Glu). This chain is Glutamate--tRNA ligase, found in Corynebacterium glutamicum (strain ATCC 13032 / DSM 20300 / JCM 1318 / BCRC 11384 / CCUG 27702 / LMG 3730 / NBRC 12168 / NCIMB 10025 / NRRL B-2784 / 534).